The sequence spans 311 residues: tRNA-cytidine(32) 2-sulfurtransferase (311 aa).

The short motif at 47–52 (SGGKDS) is the PP-loop motif element. Cysteine 122, cysteine 125, and cysteine 213 together coordinate [4Fe-4S] cluster.

Belongs to the TtcA family. In terms of assembly, homodimer. Requires Mg(2+) as cofactor. The cofactor is [4Fe-4S] cluster.

Its subcellular location is the cytoplasm. It carries out the reaction cytidine(32) in tRNA + S-sulfanyl-L-cysteinyl-[cysteine desulfurase] + AH2 + ATP = 2-thiocytidine(32) in tRNA + L-cysteinyl-[cysteine desulfurase] + A + AMP + diphosphate + H(+). Its pathway is tRNA modification. Functionally, catalyzes the ATP-dependent 2-thiolation of cytidine in position 32 of tRNA, to form 2-thiocytidine (s(2)C32). The sulfur atoms are provided by the cysteine/cysteine desulfurase (IscS) system. The polypeptide is tRNA-cytidine(32) 2-sulfurtransferase (Escherichia coli O45:K1 (strain S88 / ExPEC)).